A 585-amino-acid polypeptide reads, in one-letter code: Aspartate--tRNA(Asp/Asn) ligase (585 aa).

Glutamate 173 is a binding site for L-aspartate. The segment at 197–200 (QLFK) is aspartate. Arginine 219 serves as a coordination point for L-aspartate. Residues 219–221 (RDE) and glutamine 228 contribute to the ATP site. Histidine 447 provides a ligand contact to L-aspartate. Glutamate 477 is a binding site for ATP. An L-aspartate-binding site is contributed by arginine 484. 529–532 (GFDR) is an ATP binding site.

Belongs to the class-II aminoacyl-tRNA synthetase family. Type 1 subfamily. As to quaternary structure, homodimer.

The protein resides in the cytoplasm. The enzyme catalyses tRNA(Asx) + L-aspartate + ATP = L-aspartyl-tRNA(Asx) + AMP + diphosphate. In terms of biological role, aspartyl-tRNA synthetase with relaxed tRNA specificity since it is able to aspartylate not only its cognate tRNA(Asp) but also tRNA(Asn). Reaction proceeds in two steps: L-aspartate is first activated by ATP to form Asp-AMP and then transferred to the acceptor end of tRNA(Asp/Asn). This is Aspartate--tRNA(Asp/Asn) ligase from Campylobacter concisus (strain 13826).